A 346-amino-acid chain; its full sequence is Partitioning defective 6 homolog alpha (346 aa).

An interaction with PRKCI and PRKCZ region spans residues 1–116 (MARPQRTPAR…SNSLQRRKKG (116 aa)). In terms of domain architecture, PB1 spans 15–95 (IVEVKSKFDA…PPLRLLVQKR (81 aa)). Residues 126–253 (RTRPPLLISL…VTVKPANQRN (128 aa)) form an interaction with PARD3 and CDC42 region. The Pseudo-CRIB domain occupies 133–150 (ISLPQDFRQVSSVIDVDL). Positions 157 to 250 (RVRLHKHGSD…NLIVTVKPAN (94 aa)) constitute a PDZ domain. 2 disordered regions span residues 257–294 (RGASGRLTGPSSVGPGPTDPDSDDDNSDPVIENRHPPC) and 317–346 (GSSLPSLDSREQANSGWGNGMRGDVSGFSL). Ser278 is modified (phosphoserine). Positions 317–332 (GSSLPSLDSREQANSG) are enriched in polar residues. The residue at position 345 (Ser345) is a Phosphoserine.

Belongs to the PAR6 family. Interacts with PALS1 and CRB3. Interacts with PARD3. Interacts with GTP-bound forms of CDC42, RHOQ/TC10 and RAC1. Interacts with the N-terminal part of PRKCI and PRKCZ. Part of a complex with PARD3, CDC42 or RAC1 and PRKCI or PRKCZ. Part of a complex with LLGL1 and PRKCI. Interacts with MAP2K5. Interacts with TGFBR1; involved in TGF-beta induced epithelial to mesenchymal transition. Interacts with ECT2 ('Thr-359' phosphorylated form) and PRKCI. Interacts with DCTN1 and PCM1. Post-translationally, phosphorylated by the TGF-beta receptor. Ubiquitinated by the SCF(FBXO31) complex, leading to its proteasomal degradation.

It is found in the cytoplasm. It localises to the cell membrane. Its subcellular location is the cell junction. The protein localises to the tight junction. The protein resides in the cytoskeleton. It is found in the microtubule organizing center. It localises to the centrosome. Its subcellular location is the centriolar satellite. Functionally, adapter protein involved in asymmetrical cell division and cell polarization processes. Probably involved in the formation of epithelial tight junctions. Association with PARD3 may prevent the interaction of PARD3 with F11R/JAM1, thereby preventing tight junction assembly. The PARD6-PARD3 complex links GTP-bound Rho small GTPases to atypical protein kinase C proteins. Regulates centrosome organization and function. Essential for the centrosomal recruitment of key proteins that control centrosomal microtubule organization. The sequence is that of Partitioning defective 6 homolog alpha (Pard6a) from Rattus norvegicus (Rat).